We begin with the raw amino-acid sequence, 247 residues long: Enolase-phosphatase E1 (247 aa).

This sequence belongs to the HAD-like hydrolase superfamily. MasA/MtnC family. In terms of assembly, monomer. Requires Mg(2+) as cofactor.

The enzyme catalyses 5-methylsulfanyl-2,3-dioxopentyl phosphate + H2O = 1,2-dihydroxy-5-(methylsulfanyl)pent-1-en-3-one + phosphate. It participates in amino-acid biosynthesis; L-methionine biosynthesis via salvage pathway; L-methionine from S-methyl-5-thio-alpha-D-ribose 1-phosphate: step 3/6. The protein operates within amino-acid biosynthesis; L-methionine biosynthesis via salvage pathway; L-methionine from S-methyl-5-thio-alpha-D-ribose 1-phosphate: step 4/6. Functionally, bifunctional enzyme that catalyzes the enolization of 2,3-diketo-5-methylthiopentyl-1-phosphate (DK-MTP-1-P) into the intermediate 2-hydroxy-3-keto-5-methylthiopentenyl-1-phosphate (HK-MTPenyl-1-P), which is then dephosphorylated to form the acireductone 1,2-dihydroxy-3-keto-5-methylthiopentene (DHK-MTPene). The polypeptide is Enolase-phosphatase E1 (Leptospira biflexa serovar Patoc (strain Patoc 1 / Ames)).